Here is a 368-residue protein sequence, read N- to C-terminus: Phosphoribosylformylglycinamidine cyclo-ligase (368 aa).

This sequence belongs to the AIR synthase family.

It localises to the cytoplasm. It carries out the reaction 2-formamido-N(1)-(5-O-phospho-beta-D-ribosyl)acetamidine + ATP = 5-amino-1-(5-phospho-beta-D-ribosyl)imidazole + ADP + phosphate + H(+). Its pathway is purine metabolism; IMP biosynthesis via de novo pathway; 5-amino-1-(5-phospho-D-ribosyl)imidazole from N(2)-formyl-N(1)-(5-phospho-D-ribosyl)glycinamide: step 2/2. In Novosphingobium aromaticivorans (strain ATCC 700278 / DSM 12444 / CCUG 56034 / CIP 105152 / NBRC 16084 / F199), this protein is Phosphoribosylformylglycinamidine cyclo-ligase.